The following is a 107-amino-acid chain: Protein Rev (107 aa).

Ser-5 carries the post-translational modification Phosphoserine; by host CK2. The segment at Ala-18–Asn-26 is homomultimerization. Disordered stretches follow at residues Gln-24 to Arg-48 and His-82 to Ser-107. Residues Thr-34 to Arg-50 carry the Nuclear localization signal and RNA-binding (RRE) motif. A compositionally biased stretch (basic residues) spans Gln-36–Arg-48. The short motif at Leu-73–Asp-84 is the Nuclear export signal and binding to XPO1 element. The segment covering Asp-88–Glu-101 has biased composition (polar residues). Residue Ser-92 is modified to Phosphoserine; by host.

It belongs to the HIV-1 REV protein family. As to quaternary structure, homomultimer; when bound to the RRE. Multimeric assembly is essential for activity and may involve XPO1. Binds to human KPNB1, XPO1, TNPO1, RANBP5 and IPO7. Interacts with the viral Integrase. Interacts with human KHDRBS1. Interacts with human NAP1; this interaction decreases Rev multimerization and stimulates its activity. Interacts with human DEAD-box helicases DDX3 and DDX24; these interactions may serve for viral RNA export to the cytoplasm and packaging, respectively. Interacts with human PSIP1; this interaction may inhibit HIV-1 DNA integration by promoting dissociation of the Integrase-LEDGF/p75 complex. In terms of processing, asymmetrically arginine dimethylated at one site by host PRMT6. Methylation impairs the RNA-binding activity and export of viral RNA from the nucleus to the cytoplasm. Phosphorylated by protein kinase CK2. Presence of, and maybe binding to the N-terminus of the regulatory beta subunit of CK2 is necessary for CK2-mediated Rev's phosphorylation.

The protein localises to the host nucleus. The protein resides in the host nucleolus. Its subcellular location is the host cytoplasm. Its function is as follows. Escorts unspliced or incompletely spliced viral pre-mRNAs (late transcripts) out of the nucleus of infected cells. These pre-mRNAs carry a recognition sequence called Rev responsive element (RRE) located in the env gene, that is not present in fully spliced viral mRNAs (early transcripts). This function is essential since most viral proteins are translated from unspliced or partially spliced pre-mRNAs which cannot exit the nucleus by the pathway used by fully processed cellular mRNAs. Rev itself is translated from a fully spliced mRNA that readily exits the nucleus. Rev's nuclear localization signal (NLS) binds directly to KPNB1/Importin beta-1 without previous binding to KPNA1/Importin alpha-1. KPNB1 binds to the GDP bound form of RAN (Ran-GDP) and targets Rev to the nucleus. In the nucleus, the conversion from Ran-GDP to Ran-GTP dissociates Rev from KPNB1 and allows Rev's binding to the RRE in viral pre-mRNAs. Rev multimerization on the RRE via cooperative assembly exposes its nuclear export signal (NES) to the surface. Rev can then form a complex with XPO1/CRM1 and Ran-GTP, leading to nuclear export of the complex. Conversion from Ran-GTP to Ran-GDP mediates dissociation of the Rev/RRE/XPO1/RAN complex, so that Rev can return to the nucleus for a subsequent round of export. Beside KPNB1, also seems to interact with TNPO1/Transportin-1, RANBP5/IPO5 and IPO7/RANBP7 for nuclear import. The nucleoporin-like HRB/RIP is an essential cofactor that probably indirectly interacts with Rev to release HIV RNAs from the perinuclear region to the cytoplasm. This chain is Protein Rev, found in Human immunodeficiency virus type 1 group M subtype G (isolate SE6165) (HIV-1).